The following is a 769-amino-acid chain: Glutathione biosynthesis bifunctional protein GshAB (769 aa).

Positions Met1 to Ile347 are glutamate--cysteine ligase. Residues Lys514 to Phe768 form the ATP-grasp domain. Ser541–Arg599 is a binding site for ATP. The Mg(2+) site is built by Asp721, Glu738, and Asn740. Asp721, Glu738, and Asn740 together coordinate Mn(2+).

It in the N-terminal section; belongs to the glutamate--cysteine ligase type 1 family. Type 2 subfamily. Monomer. It depends on Mg(2+) as a cofactor. Mn(2+) serves as cofactor.

The enzyme catalyses L-cysteine + L-glutamate + ATP = gamma-L-glutamyl-L-cysteine + ADP + phosphate + H(+). The catalysed reaction is gamma-L-glutamyl-L-cysteine + glycine + ATP = glutathione + ADP + phosphate + H(+). It participates in sulfur metabolism; glutathione biosynthesis; glutathione from L-cysteine and L-glutamate: step 1/2. Its pathway is sulfur metabolism; glutathione biosynthesis; glutathione from L-cysteine and L-glutamate: step 2/2. Synthesizes glutathione from L-glutamate and L-cysteine via gamma-L-glutamyl-L-cysteine. In Listeria monocytogenes serotype 4b (strain F2365), this protein is Glutathione biosynthesis bifunctional protein GshAB.